Here is a 361-residue protein sequence, read N- to C-terminus: Chorismate synthase (361 aa).

Residues 38–49 (EKDMQHDLDRRR) show a composition bias toward basic and acidic residues. The tract at residues 38 to 58 (EKDMQHDLDRRRPGTSKYTTQ) is disordered. Residue arginine 48 coordinates NADP(+). FMN contacts are provided by residues 125–127 (RSS), 238–239 (NA), glycine 278, 293–297 (KPTSS), and arginine 319.

Belongs to the chorismate synthase family. Homotetramer. Requires FMNH2 as cofactor.

The catalysed reaction is 5-O-(1-carboxyvinyl)-3-phosphoshikimate = chorismate + phosphate. The protein operates within metabolic intermediate biosynthesis; chorismate biosynthesis; chorismate from D-erythrose 4-phosphate and phosphoenolpyruvate: step 7/7. Catalyzes the anti-1,4-elimination of the C-3 phosphate and the C-6 proR hydrogen from 5-enolpyruvylshikimate-3-phosphate (EPSP) to yield chorismate, which is the branch point compound that serves as the starting substrate for the three terminal pathways of aromatic amino acid biosynthesis. This reaction introduces a second double bond into the aromatic ring system. The chain is Chorismate synthase from Photobacterium profundum (strain SS9).